The primary structure comprises 594 residues: Zinc finger protein 467 (594 aa).

The tract at residues 1–70 (MRETLEALNS…HTEQAEAPCM (70 aa)) is disordered. Residue Lys97 forms a Glycyl lysine isopeptide (Lys-Gly) (interchain with G-Cter in SUMO2) linkage. C2H2-type zinc fingers lie at residues 160–182 (YGCEECERRFRDQLTLRLHQRLH), 188–210 (CACPDCGRSFTQRAHMLLHQRSH), 216–238 (FPCSECDKRFSKKAHLTRHLRTH), 244–266 (YPCAECGKRFSQKIHLGSHQKTH), 272–294 (FPCTECEKRFRKKTHLIRHQRIH), 300–322 (YQCTQCTRSFTHKQHLVRHQRVH), 355–377 (FACSHCGQSFGWKKNLATHQSLH), 430–452 (FFCPDCGRGFAHGQHLARHRRVH), 458–480 (FACAQCGRRFGSRPNLVAHSRAH), 486–508 (FACAQCGRRFSRKSHLGRHQAVH), 514–536 (HACAVCARCFSSKTNLVRHQAIH), and 542–564 (FSCPQCAKSFSRKTHLVRHQRIH). The tract at residues 313–350 (QHLVRHQRVHDAASRTRSSPDIPATPHPPTASLAPSPT) is disordered. A Glycyl lysine isopeptide (Lys-Gly) (interchain with G-Cter in SUMO2) cross-link involves residue Lys368.

Belongs to the krueppel C2H2-type zinc-finger protein family. Interacts with STAT3. Enhances STAT3 activity by keeping it in the nucleus.

The protein resides in the nucleus. In terms of biological role, transcription factor that promotes adipocyte differentiation and suppresses osteoblast differentiation in the bone marrow. Enhances the osteoclast-supporting ability of stromal cells. Binds with STAT3 the consensus sequence 5'-CTTCTGGGAAGA-3' of the acute phase response element (APRE). Transactivates several promoters including FOS, OSM and PPARG. Recruits a histone deacetylase complex. The protein is Zinc finger protein 467 (Znf467) of Rattus norvegicus (Rat).